The chain runs to 911 residues: Chromatin assembly factor 1 subunit A (911 aa).

A binds PCNA region spans residues 1–31; the sequence is MLEEPEAATRTAAAVDCKDRPGFPVKRLIQA. Positions 166 to 200 are disordered; sequence HMEEEPGSPGDPKRTGDCQAGSLQSCPELTPGSRT. A binds CBX1 and CBX3 chromo shadow domains region spans residues 176 to 327; sequence DPKRTGDCQA…LHRDREQQRE (152 aa). The segment covering 186–200 has biased composition (polar residues); it reads GSLQSCPELTPGSRT. A phosphoserine mark is found at Ser190 and Ser208. A PxVxL motif motif is present at residues 217-230; sequence FIEKVPVVVLEDIL. 2 disordered regions span residues 250–408 and 578–618; these read SESE…EEEK and DSDD…VPHG. The segment covering 265–281 has biased composition (low complexity); it reads LSHSSTNSSSPTSSPEG. Ser293 is modified (phosphoserine). A compositionally biased stretch (basic and acidic residues) spans 310-408; it reads STEKGRSKLH…EEKRLREEEK (99 aa). Acidic residues-rich tracts occupy residues 578 to 589 and 597 to 612; these read DSDDEWEEEEPG and GDED…EDDG. Positions 621–657 are necessary for homodimerization and competence for chromatin assembly; the sequence is SEDEGVTEECADPENHKVHQKLKAKEWDELLAKGKRF. Residues 639 to 911 form a binds to p60 region; it reads HQKLKAKEWD…APIPAPTLCK (273 aa). A Phosphoserine modification is found at Ser776. Disordered stretches follow at residues 819–843 and 866–886; these read PSAP…MLLK and GSGD…DDTD. Positions 827–839 are enriched in polar residues; it reads GSASTEGPGQSTP. Thr838 is subject to Phosphothreonine. Acidic residues predominate over residues 876–886; that stretch reads DTEEDEEDDTD.

Belongs to the CHAF1A family. As to quaternary structure, homodimer. Part of the CAF-1 complex that contains RBBP4, CHAF1B and CHAF1A. CHAF1A binds directly to CHAF1B. Only minor amounts of RBBP4 are complexed with CHAF1A and CHAF1B in G1 phase. Interacts with PCNA; the interaction is direct. Interacts (via the PxVxL motif) with CBX5; the interaction is direct. Interacts with MBD1. Interacts with histones H3.1, H3.2 and H3.1t.

The protein resides in the nucleus. Acts as a component of the histone chaperone complex chromatin assembly factor 1 (CAF-1), which assembles histone octamers onto DNA during replication and repair. CAF-1 performs the first step of the nucleosome assembly process, bringing newly synthesized histones H3 and H4 to replicating DNA; histones H2A/H2B can bind to this chromatin precursor subsequent to DNA replication to complete the histone octamer. It may play a role in heterochromatin maintenance in proliferating cells by bringing newly synthesized cbx proteins to heterochromatic DNA replication foci. The sequence is that of Chromatin assembly factor 1 subunit A from Mus musculus (Mouse).